A 395-amino-acid chain; its full sequence is NADH-quinone oxidoreductase subunit D (395 aa).

This sequence belongs to the complex I 49 kDa subunit family. In terms of assembly, NDH-1 is composed of 14 different subunits. Subunits NuoB, C, D, E, F, and G constitute the peripheral sector of the complex.

The protein localises to the cell inner membrane. It carries out the reaction a quinone + NADH + 5 H(+)(in) = a quinol + NAD(+) + 4 H(+)(out). Its function is as follows. NDH-1 shuttles electrons from NADH, via FMN and iron-sulfur (Fe-S) centers, to quinones in the respiratory chain. The immediate electron acceptor for the enzyme in this species is believed to be ubiquinone. Couples the redox reaction to proton translocation (for every two electrons transferred, four hydrogen ions are translocated across the cytoplasmic membrane), and thus conserves the redox energy in a proton gradient. The sequence is that of NADH-quinone oxidoreductase subunit D from Anaplasma phagocytophilum (strain HZ).